Consider the following 117-residue polypeptide: MRLPQDIIIKPYITEKSNMEIGAGKYTFIVDVKSTKTEIKKAVEALFSVKVLQVNTMNFEGKVKRTGVHEGPRPAWKKAVVKIDTDPKPVEYLAKGGKTVTNNKKYKTSIEEFGVAQ.

This sequence belongs to the universal ribosomal protein uL23 family. As to quaternary structure, part of the 50S ribosomal subunit. Contacts protein L29, and trigger factor when it is bound to the ribosome.

Functionally, one of the early assembly proteins it binds 23S rRNA. One of the proteins that surrounds the polypeptide exit tunnel on the outside of the ribosome. Forms the main docking site for trigger factor binding to the ribosome. This is Large ribosomal subunit protein uL23 from Ruminiclostridium cellulolyticum (strain ATCC 35319 / DSM 5812 / JCM 6584 / H10) (Clostridium cellulolyticum).